Here is a 380-residue protein sequence, read N- to C-terminus: Putative 8-amino-7-oxononanoate synthase (380 aa).

Substrate is bound at residue Arg-18. 106-107 (GY) is a pyridoxal 5'-phosphate binding site. His-131 is a binding site for substrate. Pyridoxal 5'-phosphate is bound by residues Ser-179, 205–208 (DEAH), and 236–239 (TFGK). The residue at position 239 (Lys-239) is an N6-(pyridoxal phosphate)lysine. Thr-352 lines the substrate pocket.

The protein belongs to the class-II pyridoxal-phosphate-dependent aminotransferase family. BioF subfamily. As to quaternary structure, homodimer. Pyridoxal 5'-phosphate serves as cofactor.

The enzyme catalyses 6-carboxyhexanoyl-[ACP] + L-alanine + H(+) = (8S)-8-amino-7-oxononanoate + holo-[ACP] + CO2. It functions in the pathway cofactor biosynthesis; biotin biosynthesis. In terms of biological role, catalyzes the decarboxylative condensation of pimeloyl-[acyl-carrier protein] and L-alanine to produce 8-amino-7-oxononanoate (AON), [acyl-carrier protein], and carbon dioxide. The chain is Putative 8-amino-7-oxononanoate synthase (bioF) from Neisseria meningitidis serogroup C / serotype 2a (strain ATCC 700532 / DSM 15464 / FAM18).